Consider the following 471-residue polypeptide: 3-isopropylmalate dehydratase large subunit (471 aa).

Residues C351, C414, and C417 each contribute to the [4Fe-4S] cluster site.

Belongs to the aconitase/IPM isomerase family. LeuC type 1 subfamily. As to quaternary structure, heterodimer of LeuC and LeuD. The cofactor is [4Fe-4S] cluster.

It catalyses the reaction (2R,3S)-3-isopropylmalate = (2S)-2-isopropylmalate. Its pathway is amino-acid biosynthesis; L-leucine biosynthesis; L-leucine from 3-methyl-2-oxobutanoate: step 2/4. Catalyzes the isomerization between 2-isopropylmalate and 3-isopropylmalate, via the formation of 2-isopropylmaleate. The chain is 3-isopropylmalate dehydratase large subunit from Colwellia psychrerythraea (strain 34H / ATCC BAA-681) (Vibrio psychroerythus).